We begin with the raw amino-acid sequence, 441 residues long: Probable D-serine dehydratase (441 aa).

Residue lysine 101 is modified to N6-(pyridoxal phosphate)lysine.

This sequence belongs to the serine/threonine dehydratase family. DsdA subfamily. The cofactor is pyridoxal 5'-phosphate.

The catalysed reaction is D-serine = pyruvate + NH4(+). This Geobacillus kaustophilus (strain HTA426) protein is Probable D-serine dehydratase.